Here is a 382-residue protein sequence, read N- to C-terminus: Alkaline serine protease ver112 (382 aa).

The first 15 residues, 1 to 15 (MRLSIIAAVLPLALA), serve as a signal peptide directing secretion. A propeptide spanning residues 16-102 (APVAEPEIAP…IEQDAIFSIN (87 aa)) is cleaved from the precursor. One can recognise an Inhibitor I9 domain in the interval 56–99 (SKIPGIERVYENVLNGFSATLSNEELERLRRDPDVESIEQDAIF). The Peptidase S8 domain occupies 111–382 (TWGLTRISHR…VNYLAFNGAT (272 aa)). Cystine bridges form between cysteine 138–cysteine 227 and cysteine 282–cysteine 353. Catalysis depends on charge relay system residues aspartate 143, histidine 173, and serine 328.

It belongs to the peptidase S8 family.

It is found in the secreted. Its activity is regulated as follows. Inhibited by phenylmethylsulfonyl fluoride (PMSF). Serine protease which can degrade the nematode cuticle. In Corniculantispora psalliotae (Lecanicillium psalliotae), this protein is Alkaline serine protease ver112.